The following is a 622-amino-acid chain: Iron transport multicopper oxidase fetC (622 aa).

A signal peptide spans Met-1 to Ala-20. Residues Ala-21–Arg-552 lie on the Extracellular side of the membrane. Residues Asn-28 and Asn-74 are each glycosylated (N-linked (GlcNAc...) asparagine). 2 consecutive Plastocyanin-like domains span residues Val-29–Pro-144 and Glu-154–Lys-301. Cu cation contacts are provided by His-80 and His-82. N-linked (GlcNAc...) asparagine glycans are attached at residues Asn-87 and Asn-112. Positions 124 and 126 each coordinate Cu cation. N-linked (GlcNAc...) asparagine glycosylation is found at Asn-194, Asn-198, Asn-265, Asn-292, and Asn-358. The 136-residue stretch at Lys-362 to Pro-497 folds into the Plastocyanin-like 3 domain. Cu cation contacts are provided by His-412, His-415, and His-417. An N-linked (GlcNAc...) asparagine glycan is attached at Asn-428. Positions 478, 479, 480, and 484 each coordinate Cu cation. Residues Gly-553–Trp-573 traverse the membrane as a helical segment. The Cytoplasmic portion of the chain corresponds to Tyr-574–Thr-622. The segment at Thr-597–Thr-622 is disordered.

It belongs to the multicopper oxidase family.

The protein localises to the cell membrane. In terms of biological role, cell surface ferroxidase; part of the reductive iron assimilatory system (RIA), a siderophore-independent high affinity iron uptake mechanism. Required to oxidize Fe(2+) and release it from the transporter. This is Iron transport multicopper oxidase fetC from Epichloe festucae (strain E2368).